Reading from the N-terminus, the 270-residue chain is 4-hydroxy-tetrahydrodipicolinate reductase (270 aa).

Residues 9-14 and Glu35 contribute to the NAD(+) site; that span reads GAGGRM. Arg36 lines the NADP(+) pocket. Residues 99–101 and 123–126 each bind NAD(+); these read GTT and ASNF. The active-site Proton donor/acceptor is the His156. His157 provides a ligand contact to (S)-2,3,4,5-tetrahydrodipicolinate. Lys160 serves as the catalytic Proton donor. A (S)-2,3,4,5-tetrahydrodipicolinate-binding site is contributed by 166-167; sequence GT.

It belongs to the DapB family.

The protein resides in the cytoplasm. The catalysed reaction is (S)-2,3,4,5-tetrahydrodipicolinate + NAD(+) + H2O = (2S,4S)-4-hydroxy-2,3,4,5-tetrahydrodipicolinate + NADH + H(+). The enzyme catalyses (S)-2,3,4,5-tetrahydrodipicolinate + NADP(+) + H2O = (2S,4S)-4-hydroxy-2,3,4,5-tetrahydrodipicolinate + NADPH + H(+). The protein operates within amino-acid biosynthesis; L-lysine biosynthesis via DAP pathway; (S)-tetrahydrodipicolinate from L-aspartate: step 4/4. Catalyzes the conversion of 4-hydroxy-tetrahydrodipicolinate (HTPA) to tetrahydrodipicolinate. In Pasteurella multocida (strain Pm70), this protein is 4-hydroxy-tetrahydrodipicolinate reductase.